An 85-amino-acid chain; its full sequence is V-type proton ATPase subunit f (85 aa).

The Lumenal segment spans residues 1–10 (MRPVVSTGKA). A helical transmembrane segment spans residues 11–31 (WCCTVLSAFGVVILSVIAHLF). The Cytoplasmic portion of the chain corresponds to 32-54 (NTNHESFVGSINDPEDGPAVAHT). The chain crosses the membrane as a helical span at residues 55-75 (VYLAALVYLVFFVFCGFQVYL). The Lumenal segment spans residues 76-85 (ARRKPSIELR).

V-ATPase is a heteromultimeric enzyme composed of a peripheral catalytic V1 complex (components A to H) attached to an integral membrane V0 proton pore complex (components: a, c, c', c'', d, e, f and VOA1).

The protein localises to the endoplasmic reticulum membrane. It localises to the vacuole membrane. In terms of biological role, accessory component of the V0 complex of vacuolar(H+)-ATPase (V-ATPase), a multisubunit enzyme composed of a peripheral complex (V1) that hydrolyzes ATP and a membrane integral complex (V0) that translocates protons. V-ATPase is responsible for acidifying and maintaining the pH of intracellular compartments. The sequence is that of V-type proton ATPase subunit f from Saccharomyces cerevisiae (strain ATCC 204508 / S288c) (Baker's yeast).